A 273-amino-acid polypeptide reads, in one-letter code: Putative pyruvate, phosphate dikinase regulatory protein (273 aa).

153-160 (GVSRTSKS) serves as a coordination point for ADP.

It belongs to the pyruvate, phosphate/water dikinase regulatory protein family. PDRP subfamily.

It catalyses the reaction N(tele)-phospho-L-histidyl/L-threonyl-[pyruvate, phosphate dikinase] + ADP = N(tele)-phospho-L-histidyl/O-phospho-L-threonyl-[pyruvate, phosphate dikinase] + AMP + H(+). The catalysed reaction is N(tele)-phospho-L-histidyl/O-phospho-L-threonyl-[pyruvate, phosphate dikinase] + phosphate + H(+) = N(tele)-phospho-L-histidyl/L-threonyl-[pyruvate, phosphate dikinase] + diphosphate. Bifunctional serine/threonine kinase and phosphorylase involved in the regulation of the pyruvate, phosphate dikinase (PPDK) by catalyzing its phosphorylation/dephosphorylation. The chain is Putative pyruvate, phosphate dikinase regulatory protein from Ehrlichia ruminantium (strain Gardel).